A 365-amino-acid chain; its full sequence is Probable L-tyrosine/L-aspartate decarboxylase (365 aa).

Lys224 carries the post-translational modification N6-(pyridoxal phosphate)lysine.

Belongs to the group II decarboxylase family. MfnA subfamily. The cofactor is pyridoxal 5'-phosphate.

The catalysed reaction is L-tyrosine + H(+) = tyramine + CO2. The enzyme catalyses L-aspartate + H(+) = beta-alanine + CO2. Its pathway is cofactor biosynthesis; methanofuran biosynthesis. It functions in the pathway cofactor biosynthesis; coenzyme A biosynthesis. Functionally, catalyzes the decarboxylation of L-tyrosine to produce tyramine for methanofuran biosynthesis. Can also catalyze the decarboxylation of L-aspartate to produce beta-alanine for coenzyme A (CoA) biosynthesis. In Methanoculleus marisnigri (strain ATCC 35101 / DSM 1498 / JR1), this protein is Probable L-tyrosine/L-aspartate decarboxylase.